An 800-amino-acid chain; its full sequence is Mitogen-activated protein kinase kinase kinase 20 (800 aa).

N-acetylserine is present on S2. A phosphoserine; by autocatalysis mark is found at S2, S3, and S7. The Protein kinase domain occupies 16–277 (LQFFENCGGG…SLPDKCNSFL (262 aa)). ATP contacts are provided by residues 22–30 (CGGGSFGSV) and K45. D133 functions as the Proton acceptor in the catalytic mechanism. T161 is modified (phosphothreonine; by autocatalysis). Residue S165 is modified to Phosphoserine; by autocatalysis. S275 carries the phosphoserine modification. The segment at 287–308 (IEATLERLKKLERDLSFKEQEL) is leucine-zipper. Position 302 is a phosphoserine; by autocatalysis (S302). Phosphoserine occurs at positions 339, 429, 434, 454, and 567. The SAM domain maps to 339–410 (WTEDDVYCWV…KSAIEKLTHD (72 aa)). T586 bears the Phosphothreonine; by autocatalysis mark. S587 is modified (phosphoserine; by autocatalysis). 2 positions are modified to phosphoserine: S593 and S599. T628 is subject to Phosphothreonine. S633, S637, and S648 each carry phosphoserine. Phosphoserine; by autocatalysis is present on residues S649 and S660. The span at 652 to 666 (LNSRDSGFSSGNTDT) shows a compositional bias: polar residues. The tract at residues 652-800 (LNSRDSGFSS…RGDHRGWRNF (149 aa)) is disordered. The residue at position 664 (T664) is a Phosphothreonine; by autocatalysis. The segment covering 667–678 (SSERGRYSDRSR) has biased composition (basic and acidic residues). A sensing domain (S) region spans residues 670–713 (RGRYSDRSRNKYGRGSISLNSSPRGRYSGKSQHSTPSRGRYPGK). S685 bears the Phosphoserine mark. Polar residues-rich tracts occupy residues 686-706 (ISLN…STPS) and 717-726 (VSQSALNPHQ). Residues S718 and S720 each carry the phosphoserine; by autocatalysis modification. Residues S727 and S733 each carry the phosphoserine modification. Basic and acidic residues predominate over residues 728–738 (PDFKRSPRDLH). At T742 the chain carries Phosphothreonine; by autocatalysis. Basic and acidic residues-rich tracts occupy residues 750–763 (PETD…DSKV) and 785–800 (TNKE…WRNF). Residues 774–800 (RKKPHRPSPAKTNKERARGDHRGWRNF) are C-terminal domain (CTD).

This sequence belongs to the protein kinase superfamily. STE Ser/Thr protein kinase family. MAP kinase kinase kinase subfamily. In terms of assembly, homodimer. Interacts with ZNF33A. Component of a signaling complex containing at least AKAP13, PKN1, MAPK14, MAP3K20 and MAP2K3. Within this complex, AKAP13 interacts directly with PKN1, which in turn recruits MAPK14, MAP2K3 and MAP3K20. Interacts with EIF2AK4/GCN2; promoting EIF2AK4/GCN2 kinase activity. As to quaternary structure, interacts with isoform ZAKbeta. Interacts with isoform ZAKalpha. Requires Mg(2+) as cofactor. Activated by phosphorylation by PKN1, followed by autophosphorylation on Thr-161 and Ser-165. Autophosphorylation in response to ribotoxic stress promotes dissociation from colliding ribosomes and activation. Ubiquitously expressed. Isoform ZAKbeta is the predominant form in all tissues examined, except for liver, in which isoform ZAKalpha is more highly expressed.

It is found in the cytoplasm. The protein resides in the nucleus. The enzyme catalyses L-seryl-[protein] + ATP = O-phospho-L-seryl-[protein] + ADP + H(+). The catalysed reaction is L-threonyl-[protein] + ATP = O-phospho-L-threonyl-[protein] + ADP + H(+). Its activity is regulated as follows. Activated in response to stress, such as ribosomal stress, osmotic shock and ionizing radiation. Activated by phosphorylation by PKN1, followed by autophosphorylation on Thr-161 and Ser-165. Inhibited by nilotinib, sorafenib, dabrafenib, rebastinib and vemurafenib. Selectively inhibited by N-(3)-((1H-Pyrazolo[3,4-b]pyridin-5-yl)ethynyl)benzenesulfonamide compound 3h. Selectively inhibited by 1,2,3-triazole benzenesulfonamides. In terms of biological role, stress-activated component of a protein kinase signal transduction cascade that promotes programmed cell death in response to various stress, such as ribosomal stress, osmotic shock and ionizing radiation. Acts by catalyzing phosphorylation of MAP kinase kinases, leading to activation of the JNK (MAPK8/JNK1, MAPK9/JNK2 and/or MAPK10/JNK3) and MAP kinase p38 (MAPK11, MAPK12, MAPK13 and/or MAPK14) pathways. Activates JNK through phosphorylation of MAP2K4/MKK4 and MAP2K7/MKK7, and MAP kinase p38 gamma (MAPK12) via phosphorylation of MAP2K3/MKK3 and MAP2K6/MKK6. Involved in stress associated with adrenergic stimulation: contributes to cardiac decompensation during periods of acute cardiac stress. May be involved in regulation of S and G2 cell cycle checkpoint by mediating phosphorylation of CHEK2. Functionally, key component of the stress-activated protein kinase signaling cascade in response to ribotoxic stress or UV-B irradiation. Acts as the proximal sensor of ribosome collisions during the ribotoxic stress response (RSR): directly binds to the ribosome by inserting its flexible C-terminus into the ribosomal intersubunit space, thereby acting as a sentinel for colliding ribosomes. Upon ribosome collisions, activates either the stress-activated protein kinase signal transduction cascade or the integrated stress response (ISR), leading to programmed cell death or cell survival, respectively. Dangerous levels of ribosome collisions trigger the autophosphorylation and activation of MAP3K20, which dissociates from colliding ribosomes and phosphorylates MAP kinase kinases, leading to activation of the JNK and MAP kinase p38 pathways that promote programmed cell death. Less dangerous levels of ribosome collisions trigger the integrated stress response (ISR): MAP3K20 activates EIF2AK4/GCN2 independently of its protein-kinase activity, promoting EIF2AK4/GCN2-mediated phosphorylation of EIF2S1/eIF-2-alpha. Also part of the stress-activated protein kinase signaling cascade triggering the NLRP1 inflammasome in response to UV-B irradiation: ribosome collisions activate MAP3K20, which directly phosphorylates NLRP1, leading to activation of the NLRP1 inflammasome and subsequent pyroptosis. NLRP1 is also phosphorylated by MAP kinase p38 downstream of MAP3K20. Also acts as a histone kinase by phosphorylating histone H3 at 'Ser-28' (H3S28ph). Isoform that lacks the C-terminal region that mediates ribosome-binding: does not act as a sensor of ribosome collisions in response to ribotoxic stress. May act as an antagonist of isoform ZAKalpha: interacts with isoform ZAKalpha, leading to decrease the expression of isoform ZAKalpha. This chain is Mitogen-activated protein kinase kinase kinase 20, found in Homo sapiens (Human).